Reading from the N-terminus, the 794-residue chain is Sucrose synthase (794 aa).

The tract at residues 263-742 is GT-B glycosyltransferase; sequence MISRLLILSP…ALDRVASRYT (480 aa).

This sequence belongs to the glycosyltransferase 1 family. As to quaternary structure, homotetramer.

The catalysed reaction is an NDP-alpha-D-glucose + D-fructose = a ribonucleoside 5'-diphosphate + sucrose + H(+). It carries out the reaction ADP-alpha-D-glucose + D-fructose = sucrose + ADP + H(+). Inhibited by GDP over 10 mM and by over 2 mM MgCl(2). Its function is as follows. Catalyzes the reversible conversion of sucrose and a nucleotide disphosphate (NDP) into fructose and NDP-glucose; although the reaction is freely reversible in vitro, the physiological reaction seems to be sucrose cleavage. Unlike characterized plant enzymes prefers ADP as a cosubstrate, whereas plants prefer UDP. The KM for sucrose is 8-fold lower in the presence of ADP than UDP. Its preference for ADP over UDP suggests it may directly link sucrose and glycogen metabolism. The sequence is that of Sucrose synthase (ss2) from Nitrosomonas europaea (strain ATCC 19718 / CIP 103999 / KCTC 2705 / NBRC 14298).